The chain runs to 366 residues: Chorismate synthase (366 aa).

The NADP(+) site is built by arginine 48 and arginine 54. Residues 129-131, 241-242, glycine 290, 305-309, and arginine 331 contribute to the FMN site; these read RSS, NA, and KPTSS.

Belongs to the chorismate synthase family. As to quaternary structure, homotetramer. Requires FMNH2 as cofactor.

The catalysed reaction is 5-O-(1-carboxyvinyl)-3-phosphoshikimate = chorismate + phosphate. Its pathway is metabolic intermediate biosynthesis; chorismate biosynthesis; chorismate from D-erythrose 4-phosphate and phosphoenolpyruvate: step 7/7. Functionally, catalyzes the anti-1,4-elimination of the C-3 phosphate and the C-6 proR hydrogen from 5-enolpyruvylshikimate-3-phosphate (EPSP) to yield chorismate, which is the branch point compound that serves as the starting substrate for the three terminal pathways of aromatic amino acid biosynthesis. This reaction introduces a second double bond into the aromatic ring system. The sequence is that of Chorismate synthase from Nitrobacter hamburgensis (strain DSM 10229 / NCIMB 13809 / X14).